Consider the following 189-residue polypeptide: dCTP deaminase (189 aa).

Residues 112–117 (KSTYAR), 136–138 (TLE), glutamine 157, tyrosine 171, and glutamine 181 each bind dCTP. Glutamate 138 functions as the Proton donor/acceptor in the catalytic mechanism.

It belongs to the dCTP deaminase family. In terms of assembly, homotrimer.

It catalyses the reaction dCTP + H2O + H(+) = dUTP + NH4(+). The protein operates within pyrimidine metabolism; dUMP biosynthesis; dUMP from dCTP (dUTP route): step 1/2. Its function is as follows. Catalyzes the deamination of dCTP to dUTP. The polypeptide is dCTP deaminase (Burkholderia mallei (strain NCTC 10247)).